We begin with the raw amino-acid sequence, 262 residues long: uncharacterized protein (262 aa).

3 consecutive transmembrane segments (helical) span residues 4–24 (LIVF…RFLG), 28–48 (VSRF…CLFR), and 62–82 (CYLA…SHIL). The stretch at 152 to 181 (EREARAQEHDRISAEVETITSACENLEAAM) forms a coiled coil.

The protein localises to the mitochondrion membrane. This is an uncharacterized protein from Arabidopsis thaliana (Mouse-ear cress).